The chain runs to 261 residues: uncharacterized protein (261 aa).

Residues 1–22 (MRDSKRVVLYISIMVLSIFIIG) form the signal peptide. Cys-23 carries the N-palmitoyl cysteine lipid modification. Cys-23 carries S-diacylglycerol cysteine lipidation.

It belongs to the staphylococcal tandem lipoprotein family.

It localises to the cell membrane. This is an uncharacterized protein from Staphylococcus aureus (strain N315).